Consider the following 476-residue polypeptide: Surface membrane glycoprotein GP46/M-2 (476 aa).

Residues 1 to 32 (MAQCVRRLVLAAPLAAVVALLLCTSSAPVARA) form the signal peptide. Repeat copies occupy residues 107–130 (VMIL…PSWS), 131–154 (SMKH…PEWS), 155–178 (EMTS…TSWS), and 179–202 (SMPK…DSWR). Residues 107-202 (VMILALDFGA…FCGCVPDSWR (96 aa)) form a 4 X 24 AA tandem repeats region. Disordered stretches follow at residues 231-255 (APGT…PSPG) and 348-370 (ALSP…RRRA). The GPI-anchor amidated cysteine moiety is linked to residue Cys-452. Positions 453–476 (PALFDGARLRCCALVVCAGAAPAG) are cleaved as a propeptide — removed in mature form.

The protein localises to the cell membrane. The chain is Surface membrane glycoprotein GP46/M-2 from Leishmania amazonensis.